Reading from the N-terminus, the 117-residue chain is DNA-directed RNA polymerase subunit omega (117 aa).

The protein belongs to the RNA polymerase subunit omega family. The RNAP catalytic core consists of 2 alpha, 1 beta, 1 beta' and 1 omega subunit. When a sigma factor is associated with the core the holoenzyme is formed, which can initiate transcription.

It carries out the reaction RNA(n) + a ribonucleoside 5'-triphosphate = RNA(n+1) + diphosphate. Its function is as follows. Promotes RNA polymerase assembly. Latches the N- and C-terminal regions of the beta' subunit thereby facilitating its interaction with the beta and alpha subunits. The polypeptide is DNA-directed RNA polymerase subunit omega (Cereibacter sphaeroides (strain ATCC 17025 / ATH 2.4.3) (Rhodobacter sphaeroides)).